The sequence spans 188 residues: Shikimate kinase (188 aa).

21–26 (GAGKTT) contacts ATP. Thr25 contributes to the Mg(2+) binding site. Substrate is bound by residues Asp43, Arg67, and Gly90. An ATP-binding site is contributed by Arg130. Arg148 lines the substrate pocket.

It belongs to the shikimate kinase family. In terms of assembly, monomer. The cofactor is Mg(2+).

The protein localises to the cytoplasm. The enzyme catalyses shikimate + ATP = 3-phosphoshikimate + ADP + H(+). Its pathway is metabolic intermediate biosynthesis; chorismate biosynthesis; chorismate from D-erythrose 4-phosphate and phosphoenolpyruvate: step 5/7. Catalyzes the specific phosphorylation of the 3-hydroxyl group of shikimic acid using ATP as a cosubstrate. The sequence is that of Shikimate kinase from Geobacillus thermodenitrificans (strain NG80-2).